A 1437-amino-acid polypeptide reads, in one-letter code: CRISPR-associated endoribonuclease Cas13a (1437 aa).

HEPN-like fold stretches follow at residues 460–626 (LNAS…AMFE) and 1101–1437 (EFRD…QLKN). Residues 1377 to 1419 (EVKEKKKPSDNNTGKGYSKRDRQQDRKEYDKYKEKKKKEGNFL) are disordered. Positions 1394-1416 (SKRDRQQDRKEYDKYKEKKKKEG) are enriched in basic and acidic residues.

The protein belongs to the CRISPR-associated endoribonuclease Cas13a family. A divalent metal cation is required as a cofactor.

With respect to regulation, target RNA acts as an activator for non-specific ssRNA degradation. Its function is as follows. CRISPR (clustered regularly interspaced short palindromic repeat), is an adaptive immune system that provides protection against mobile genetic elements (viruses, transposable elements and conjugative plasmids). CRISPR clusters contain sequences complementary to antecedent mobile elements and target invading nucleic acids. Unlike many single-component effectors, this CRISPR-Cas system targets RNA. CRISPR clusters are transcribed from pre-CRISPR RNA (crRNA) and processed into crRNA by this protein. Cleaves linear target ssRNA in a pre-crRNA-dependent fashion, preferentially around A residues. Binding a viable target RNA target activates this protein for non-specific RNA degradation in vitro (called collateral RNA degradation), but it is not very sensitive as it requires nanomolar levels of viable target RNA. This is CRISPR-associated endoribonuclease Cas13a from Lachnospiraceae bacterium (strain NK4A179).